We begin with the raw amino-acid sequence, 240 residues long: Mitochondrial transcription rescue factor 1 (240 aa).

The N-terminal 83 residues, 1 to 83, are a transit peptide targeting the mitochondrion; that stretch reads MAVPGVRLLT…ECYFPFSIRL (83 aa). The interval 92–127 is disordered; that stretch reads STKKTLQKEADEEDSDEETSYPERSEQEEELESEPG. Residues 101 to 124 show a composition bias toward acidic residues; the sequence is ADEEDSDEETSYPERSEQEEELES. 2 positions are modified to phosphoserine: serine 106 and serine 116. Residues 142 to 217 form the S4 RNA-binding domain; it reads FRYDVILKTG…LKKVYEEKTE (76 aa).

Monomer. Interacts with POLRMT. Interacts (via S4 domain) with MTRFR (via C-terminus). Associates with mitoribosomal S39 large subunit, peptidyl tRNA and nascent chain.

The protein resides in the mitochondrion matrix. Functionally, mitochondrial RNA-binding protein involved in mitochondrial transcription regulation. Functions as a protective factor to maintain proper mitochondrial RNA level during stress. Acts at the transcription level and its protective function depends on its RNA binding ability. Part of a mitoribosome-associated quality control pathway that prevents aberrant translation by responding to interruptions during elongation. As heterodimer with MTRF, ejects the unfinished nascent chain and peptidyl transfer RNA (tRNA), respectively, from stalled ribosomes. Recruitment of mitoribosome biogenesis factors to these quality control intermediates suggests additional roles for MTRES1 and MTRF during mitoribosome rescue. In Mus musculus (Mouse), this protein is Mitochondrial transcription rescue factor 1 (Mtres1).